The sequence spans 310 residues: Ribosomal RNA small subunit methyltransferase H (310 aa).

S-adenosyl-L-methionine is bound by residues 32 to 34 (GGH), Asp-52, Phe-79, Asp-100, and Gln-107.

The protein belongs to the methyltransferase superfamily. RsmH family.

Its subcellular location is the cytoplasm. It catalyses the reaction cytidine(1402) in 16S rRNA + S-adenosyl-L-methionine = N(4)-methylcytidine(1402) in 16S rRNA + S-adenosyl-L-homocysteine + H(+). In terms of biological role, specifically methylates the N4 position of cytidine in position 1402 (C1402) of 16S rRNA. The polypeptide is Ribosomal RNA small subunit methyltransferase H (Geobacillus kaustophilus (strain HTA426)).